Consider the following 304-residue polypeptide: Oxygen-dependent coproporphyrinogen-III oxidase (304 aa).

S95 lines the substrate pocket. Residues H99 and H109 each coordinate a divalent metal cation. H109 (proton donor) is an active-site residue. 111–113 (NVR) contacts substrate. A divalent metal cation-binding residues include H148 and H178. Residues 243–278 (YVEFNLVYDRGTLFGLQSGGRTESILMSLPPLVRWR) form an important for dimerization region. 261 to 263 (GGR) serves as a coordination point for substrate.

It belongs to the aerobic coproporphyrinogen-III oxidase family. As to quaternary structure, homodimer. A divalent metal cation serves as cofactor.

The protein localises to the cytoplasm. It catalyses the reaction coproporphyrinogen III + O2 + 2 H(+) = protoporphyrinogen IX + 2 CO2 + 2 H2O. The protein operates within porphyrin-containing compound metabolism; protoporphyrin-IX biosynthesis; protoporphyrinogen-IX from coproporphyrinogen-III (O2 route): step 1/1. In terms of biological role, involved in the heme biosynthesis. Catalyzes the aerobic oxidative decarboxylation of propionate groups of rings A and B of coproporphyrinogen-III to yield the vinyl groups in protoporphyrinogen-IX. This chain is Oxygen-dependent coproporphyrinogen-III oxidase, found in Thioalkalivibrio sulfidiphilus (strain HL-EbGR7).